The following is a 556-amino-acid chain: Melanoma-associated antigen B4 (556 aa).

Positions 1 to 15 are enriched in basic residues; the sequence is MPRGQKSKARAREKR. A disordered region spans residues 1–110; that stretch reads MPRGQKSKAR…RFSENPQNDL (110 aa). The span at 39–73 shows a compositional bias: polar residues; the sequence is PSCSNQDSGDAVASTSTAGFPQKSKSQGEAPTTTA. Basic residues predominate over residues 77-87; that stretch reads GACRRSRKSTR. An MAGE domain is found at 111 to 310; that stretch reads LTRKTGMLMQ…QAFPTHYEEA (200 aa). The interval 315–335 is disordered; it reads EERAQAEAVGSPGTSAKDKAE. Residue S325 is modified to Phosphoserine. Repeat copies occupy residues 334–348, 349–363, 364–378, 379–392, 393–407, 408–421, 422–436, 437–451, 452–466, 467–480, 481–495, 496–510, 511–525, 526–539, and 540–554. The tract at residues 334–554 is 15 X 15 AA approximate tandem repeats; sequence AEAKVTLVDS…PLVDSSGKDK (221 aa).

In terms of tissue distribution, expressed in testis (at protein level).

It is found in the cytoplasm. In Mus musculus (Mouse), this protein is Melanoma-associated antigen B4.